A 69-amino-acid chain; its full sequence is Small ribosomal subunit protein bS21 (69 aa).

This sequence belongs to the bacterial ribosomal protein bS21 family.

The sequence is that of Small ribosomal subunit protein bS21 (rpsU) from Treponema pallidum (strain Nichols).